A 408-amino-acid polypeptide reads, in one-letter code: Protein SLX4IP (408 aa).

Residues lysine 61 and lysine 79 each participate in a glycyl lysine isopeptide (Lys-Gly) (interchain with G-Cter in SUMO2) cross-link. Position 130 is a phosphoserine (serine 130). Residues lysine 167 and lysine 176 each participate in a glycyl lysine isopeptide (Lys-Gly) (interchain with G-Cter in SUMO2) cross-link. Positions 173 to 226 (TETKSSVTSKSQTRRDTVETSSDSVIAEIARRRNDGQASSSPPSESMGQAKDSI) are disordered. Positions 208 to 219 (GQASSSPPSESM) are enriched in polar residues. Serine 213 carries the post-translational modification Phosphoserine. Glycyl lysine isopeptide (Lys-Gly) (interchain with G-Cter in SUMO2) cross-links involve residues lysine 239 and lysine 242. Residues 243 to 255 (VNQTQPEDTSGQQ) are compositionally biased toward polar residues. The tract at residues 243-313 (VNQTQPEDTS…DFDHHGRVSL (71 aa)) is disordered. Glycyl lysine isopeptide (Lys-Gly) (interchain with G-Cter in SUMO2) cross-links involve residues lysine 256, lysine 291, lysine 347, lysine 356, and lysine 372. The tract at residues 365-408 (LSSRHLMKNNPGQAQQTGLATNTERLSTIQNSPTKKRKKYERGH) is disordered. Polar residues predominate over residues 374 to 397 (NPGQAQQTGLATNTERLSTIQNSP). A Phosphothreonine modification is found at threonine 392. The segment covering 398-408 (TKKRKKYERGH) has biased composition (basic residues). Lysine 399 participates in a covalent cross-link: Glycyl lysine isopeptide (Lys-Gly) (interchain with G-Cter in SUMO2).

This sequence belongs to the SLX4IP family. In terms of assembly, interacts with SLX4/BTBD12; subunit of different structure-specific endonucleases.

This is Protein SLX4IP (SLX4IP) from Homo sapiens (Human).